Reading from the N-terminus, the 146-residue chain is Large ribosomal subunit protein uL15 (146 aa).

Residues 1–54 are disordered; that stretch reads MKLHELRPAAGSKSAPKRVGRGTGSGLGRNAGKGEKGQNARSGGGVRPGFEGGQ. Gly residues-rich tracts occupy residues 21–31 and 42–52; these read RGTGSGLGRNA and SGGGVRPGFEG.

The protein belongs to the universal ribosomal protein uL15 family. As to quaternary structure, part of the 50S ribosomal subunit.

Binds to the 23S rRNA. The sequence is that of Large ribosomal subunit protein uL15 from Clostridium perfringens (strain ATCC 13124 / DSM 756 / JCM 1290 / NCIMB 6125 / NCTC 8237 / Type A).